The following is a 334-amino-acid chain: Trans-3-hydroxy-L-proline dehydratase (334 aa).

Residue cysteine 91 is the Proton acceptor of the active site. Residues 92 to 93 (GH), aspartate 250, and 255 to 256 (GT) contribute to the substrate site.

Belongs to the proline racemase family.

It carries out the reaction trans-3-hydroxy-L-proline = 1-pyrroline-2-carboxylate + H2O. Functionally, catalyzes the dehydration of trans-3-hydroxy-L-proline (t3LHyp) to Delta(1)-pyrroline-2-carboxylate (Pyr2C). Is likely involved in a degradation pathway that converts t3LHyp to L-proline, which allows B.cereus to grow on t3LHyp as a sole carbon source. Displays no proline racemase activity. This Bacillus cereus (strain ATCC 14579 / DSM 31 / CCUG 7414 / JCM 2152 / NBRC 15305 / NCIMB 9373 / NCTC 2599 / NRRL B-3711) protein is Trans-3-hydroxy-L-proline dehydratase.